A 536-amino-acid polypeptide reads, in one-letter code: Formate--tetrahydrofolate ligase (536 aa).

51-58 (TPAGEGKT) is an ATP binding site.

Belongs to the formate--tetrahydrofolate ligase family.

It carries out the reaction (6S)-5,6,7,8-tetrahydrofolate + formate + ATP = (6R)-10-formyltetrahydrofolate + ADP + phosphate. It participates in one-carbon metabolism; tetrahydrofolate interconversion. The chain is Formate--tetrahydrofolate ligase from Thermoplasma acidophilum (strain ATCC 25905 / DSM 1728 / JCM 9062 / NBRC 15155 / AMRC-C165).